The chain runs to 273 residues: Nitrogenase iron protein 4 (273 aa).

An ATP-binding site is contributed by 8–15; the sequence is GKGGIGKS. Residue C94 coordinates [4Fe-4S] cluster. Position 97 is an ADP-ribosylarginine; by dinitrogenase reductase ADP-ribosyltransferase (R97). [4Fe-4S] cluster is bound at residue C129.

Belongs to the NifH/BchL/ChlL family. As to quaternary structure, homodimer. [4Fe-4S] cluster serves as cofactor. Post-translationally, the reversible ADP-ribosylation of Arg-97 inactivates the nitrogenase reductase and regulates nitrogenase activity.

It catalyses the reaction N2 + 8 reduced [2Fe-2S]-[ferredoxin] + 16 ATP + 16 H2O = H2 + 8 oxidized [2Fe-2S]-[ferredoxin] + 2 NH4(+) + 16 ADP + 16 phosphate + 6 H(+). In terms of biological role, the key enzymatic reactions in nitrogen fixation are catalyzed by the nitrogenase complex, which has 2 components: the iron protein and the molybdenum-iron protein. The protein is Nitrogenase iron protein 4 (nifH4) of Clostridium pasteurianum.